Here is a 567-residue protein sequence, read N- to C-terminus: Eukaryotic translation initiation factor 3 subunit D (567 aa).

2 disordered regions span residues 12–34 (PVKSAWGPPETEQIGGDIPYAPF) and 122–160 (GQNVQRGGRGGRYGSSGGRGAGDTVVSRSSGAGGARGRR). Residues 128-142 (GGRGGRYGSSGGRGA) show a composition bias toward gly residues. The RNA gate stretch occupies residues 300 to 314 (PFDYLTVNENAYDSP).

This sequence belongs to the eIF-3 subunit D family. Component of the eukaryotic translation initiation factor 3 (eIF-3) complex. The eIF-3 complex appears to include tif32/eif3a, SPAC25G10.08/eif3b, tif33/eif3c, SPBC4C3.07/eif3f, tif35/eif3g and sum1/eif3i. This set of common subunits may also associate exclusively with either moe1/eif3d and int6/eif3e, or with SPAC821.05/eif3h and SPAC1751.03/eif3m. The eIF-3 complex may also include SPAC3A12.13c/eif3j.

It localises to the cytoplasm. Its function is as follows. mRNA cap-binding component of the eukaryotic translation initiation factor 3 (eIF-3) complex, which is involved in protein synthesis of a specialized repertoire of mRNAs and, together with other initiation factors, stimulates binding of mRNA and methionyl-tRNAi to the 40S ribosome. The eIF-3 complex specifically targets and initiates translation of a subset of mRNAs involved in cell proliferation. In the eIF-3 complex, eif3d specifically recognizes and binds the 7-methylguanosine cap of a subset of mRNAs. In Schizosaccharomyces pombe (strain 972 / ATCC 24843) (Fission yeast), this protein is Eukaryotic translation initiation factor 3 subunit D (moe1).